Reading from the N-terminus, the 40-residue chain is Adenylate kinase (40 aa).

Residue 10–15 participates in ATP binding; that stretch reads GAGKGT. The NMP stretch occupies residues 30 to 40; the sequence is STGDMFIKAIK. T31 is a binding site for AMP.

It belongs to the adenylate kinase family. As to quaternary structure, monomer.

It is found in the cytoplasm. It catalyses the reaction AMP + ATP = 2 ADP. Its pathway is purine metabolism; AMP biosynthesis via salvage pathway; AMP from ADP: step 1/1. Functionally, catalyzes the reversible transfer of the terminal phosphate group between ATP and AMP. Plays an important role in cellular energy homeostasis and in adenine nucleotide metabolism. This chain is Adenylate kinase (adk), found in Staphylococcus carnosus.